The primary structure comprises 278 residues: MSGEKDRADTGLYCVFGNPVSHSRSPEIHHAFAAQHSDPVQYEKREAPLDDFAGAVQAFREAGGLGANVTVPFKEQAFALCDAITERADQAGAVNTLWWDGDQLHGDNTDGAGLVKDIRNNQGWTIRKKRVLILGAGGAVRGVLGPILAQEPTLLRIANRTKEKAEALAGNVMKGEGPPVLGGGLDNLMGQFDLVINAISAGLHGEMPALPDGLLAEGAVAYDMVYGSEPTPFMRWAEQQGAAATADGLGMLVEQAAEAFEIWRGWRPNTAPVMASLR.

Shikimate-binding positions include 23–25 (SRS) and threonine 70. Lysine 74 functions as the Proton acceptor in the catalytic mechanism. Position 86 (glutamate 86) interacts with NADP(+). Positions 95 and 110 each coordinate shikimate. Residues 135–139 (GAGGA), 159–164 (NRTKEK), and methionine 224 contribute to the NADP(+) site. A shikimate-binding site is contributed by tyrosine 226. Glycine 248 provides a ligand contact to NADP(+).

It belongs to the shikimate dehydrogenase family. As to quaternary structure, homodimer.

The catalysed reaction is shikimate + NADP(+) = 3-dehydroshikimate + NADPH + H(+). Its pathway is metabolic intermediate biosynthesis; chorismate biosynthesis; chorismate from D-erythrose 4-phosphate and phosphoenolpyruvate: step 4/7. In terms of biological role, involved in the biosynthesis of the chorismate, which leads to the biosynthesis of aromatic amino acids. Catalyzes the reversible NADPH linked reduction of 3-dehydroshikimate (DHSA) to yield shikimate (SA). The chain is Shikimate dehydrogenase (NADP(+)) from Alcanivorax borkumensis (strain ATCC 700651 / DSM 11573 / NCIMB 13689 / SK2).